We begin with the raw amino-acid sequence, 276 residues long: Myoblast determination protein 1 homolog 1 (276 aa).

The bHLH domain occupies 84–135 (DRRKAATMRERRRLSKVNDAFETLKRCTSTNPNQRLPKVDILRNAISYIESL). Residues 228–253 (CPAVQDGSEGSSPCSPGDGSIASENG) are disordered.

As to quaternary structure, efficient DNA binding requires dimerization with another bHLH protein.

The protein resides in the nucleus. May act as a transcriptional activator that promotes transcription of muscle-specific target genes and plays a role in muscle differentiation. The chain is Myoblast determination protein 1 homolog 1 (myod1) from Oncorhynchus mykiss (Rainbow trout).